We begin with the raw amino-acid sequence, 374 residues long: DNA replication and repair protein RecF (374 aa).

An ATP-binding site is contributed by glycine 34–threonine 41.

The protein belongs to the RecF family.

It is found in the cytoplasm. The RecF protein is involved in DNA metabolism; it is required for DNA replication and normal SOS inducibility. RecF binds preferentially to single-stranded, linear DNA. It also seems to bind ATP. This chain is DNA replication and repair protein RecF, found in Rhizobium etli (strain CIAT 652).